The primary structure comprises 273 residues: LOB domain-containing protein 20 (273 aa).

The segment covering 1-15 (MADQQRGHNTSDSRR) has biased composition (basic and acidic residues). Positions 1 to 39 (MADQQRGHNTSDSRRKSLAGKRTSQQTPTSSLSSGGVSM) are disordered. Positions 23–39 (TSQQTPTSSLSSGGVSM) are enriched in low complexity. The LOB domain maps to 50-152 (SPCGACKFLR…AELSVVQSQL (103 aa)). The tract at residues 221 to 248 (LEHSLQPMPPHQQRRGDYQHEDEEESGA) is disordered.

The protein belongs to the LOB domain-containing protein family. Expressed in roots and flowers.

This Arabidopsis thaliana (Mouse-ear cress) protein is LOB domain-containing protein 20 (LBD20).